The sequence spans 328 residues: WUSCHEL-related homeobox 6 (328 aa).

Residues 1–11 (MEGSSNSPDRQ) show a composition bias toward polar residues. Residues 1 to 45 (MEGSSNSPDRQSSGGSPPEERGGGGSGGGGGRSAAGEPVRSRWTP) form a disordered region. Over residues 23-33 (GGGSGGGGGRS) the composition is skewed to gly residues. Positions 38 to 102 (PVRSRWTPKP…NRRSRSRRRQ (65 aa)) form a DNA-binding region, homeobox; WUS-type.

It belongs to the WUS homeobox family.

The protein localises to the nucleus. In terms of biological role, transcription factor which may be involved in developmental processes. This Oryza sativa subsp. indica (Rice) protein is WUSCHEL-related homeobox 6 (WOX6).